A 330-amino-acid polypeptide reads, in one-letter code: Peptide transport system ATP-binding protein SapD (330 aa).

The region spanning 6 to 259 (IRNLTIEFKT…PHHPYTQALI (254 aa)) is the ABC transporter domain. 40–47 (GESGSGKS) contributes to the ATP binding site.

Belongs to the ABC transporter superfamily.

It is found in the cell inner membrane. Functionally, involved in a peptide intake transport system that plays a role in the resistance to antimicrobial peptides. This is Peptide transport system ATP-binding protein SapD from Salmonella typhimurium (strain LT2 / SGSC1412 / ATCC 700720).